The primary structure comprises 3224 residues: MRRSKADVERYIASVQGSTPSPRQKSMKGFYFAKLYYEAKEYDLAKKYICTYINVQERDPKAHRFLGLLYELEENTDKAVECYRRSVELNPTQKDLVLKIAELLCKNDVTDGRAKYWLERAAKLFPGSPAIYKLKEQLLDCEGEDGWNKLFDLIQSELYVRPDDVHVNIRLVEVYRSTKRLKDAVAHCHEAERNIALRSSLEWNSCVVQTLKEYLESLQCLESDKSDWRATNTDLLLAYANLMLLTLSTRDVQESRELLQSFDSALQSVKSLGGNDELSATFLEMKGHFYMHAGSLLLKMGQHSSNVQWRALSELAALCYLIAFQVPRPKIKLIKGEAGQNLLEMMACDRLSQSGHMLLNLSRGKQDFLKEIVETFANKSGQSALYDALFSSQSPKDTSFLGSDDIGNIDVREPELEDLTRYDVGAIRAHNGSLQHLTWLGLQWNSLPALPGIRKWLKQLFHHLPHETSRLETNAPESICILDLEVFLLGVVYTSHLQLKEKCNSHHSSYQPLCLPLPVCKQLCTERQKSWWDAVCTLIHRKAVPGNVAKLRLLVQHEINTLRAQEKHGLQPALLVHWAECLQKTGSGLNSFYDQREYIGRSVHYWKKVLPLLKIIKKKNSIPEPIDPLFKHFHSVDIQASEIVEYEEDAHITFAILDAVNGNIEDAVTAFESIKSVVSYWNLALIFHRKAEDIENDALSPEEQEECKNYLRKTRDYLIKIIDDSDSNLSVVKKLPVPLESVKEMLNSVMQELEDYSEGGPLYKNGSLRNADSEIKHSTPSPTRYSLSPSKSYKYSPKTPPRWAEDQNSLLKMICQQVEAIKKEMQELKLNSSNSASPHRWPTENYGPDSVPDGYQGSQTFHGAPLTVATTGPSVYYSQSPAYNSQYLLRPAANVTPTKGPVYGMNRLPPQQHIYAYPQQMHTPPVQSSSACMFSQEMYGPPALRFESPATGILSPRGDDYFNYNVQQTSTNPPLPEPGYFTKPPIAAHASRSAESKTIEFGKTNFVQPMPGEGLRPSLPTQAHTTQPTPFKFNSNFKSNDGDFTFSSPQVVTQPPPAAYSNSESLLGLLTSDKPLQGDGYSGAKPIPGGQTIGPRNTFNFGSKNVSGISFTENMGSSQQKNSGFRRSDDMFTFHGPGKSVFGTPTLETANKNHETDGGSAHGDDDDDGPHFEPVVPLPDKIEVKTGEEDEEEFFCNRAKLFRFDVESKEWKERGIGNVKILRHKTSGKIRLLMRREQVLKICANHYISPDMKLTPNAGSDRSFVWHALDYADELPKPEQLAIRFKTPEEAALFKCKFEEAQSILKAPGTNVAMASNQAVRIVKEPTSHDNKDICKSDAGNLNFEFQVAKKEGSWWHCNSCSLKNASTAKKCVSCQNLNPSNKELVGPPLAETVFTPKTSPENVQDRFALVTPKKEGHWDCSICLVRNEPTVSRCIACQNTKSANKSGSSFVHQASFKFGQGDLPKPINSDFRSVFSTKEGQWDCSACLVQNEGSSTKCAACQNPRKQSLPATSIPTPASFKFGTSETSKTLKSGFEDMFAKKEGQWDCSSCLVRNEANATRCVACQNPDKPSPSTSVPAPASFKFGTSETSKAPKSGFEGMFTKKEGQWDCSVCLVRNEASATKCIACQNPGKQNQTTSAVSTPASSETSKAPKSGFEGMFTKKEGQWDCSVCLVRNEASATKCIACQNPGKQNQTTSAVSTPASSETSKAPKSGFEGMFTKKEGQWDCSVCLVRNEASATKCIACQCPSKQNQTTAISTPASSEISKAPKSGFEGMFIRKGQWDCSVCCVQNESSSLKCVACDASKPTHKPIAEAPSAFTLGSEMKLHDSSGSQVGTGFKSNFSEKASKFGNTEQGFKFGHVDQENSPSFMFQGSSNTEFKSTKEGFSIPVSADGFKFGISEPGNQEKKSEKPLENGTGFQAQDISGQKNGRGVIFGQTSSTFTFADLAKSTSGEGFQFGKKDPNFKGFSGAGEKLFSSQYGKMANKANTSGDFEKDDDAYKTEDSDDIHFEPVVQMPEKVELVTGEEDEKVLYSQRVKLFRFDAEVSQWKERGLGNLKILKNEVNGKLRMLMRREQVLKVCANHWITTTMNLKPLSGSDRAWMWLASDFSDGDAKLEQLAAKFKTPELAEEFKQKFEECQRLLLDIPLQTPHKLVDTGRAAKLIQRAEEMKSGLKDFKTFLTNDQTKVTEEENKGSGTGAAGASDTTIKPNPENTGPTLEWDNYDLREDALDDSVSSSSVHASPLASSPVRKNLFRFGESTTGFNFSFKSALSPSKSPAKLNQSGTSVGTDEESDVTQEEERDGQYFEPVVPLPDLVEVSSGEENEQVVFSHRAKLYRYDKDVGQWKERGIGDIKILQNYDNKQVRIVMRRDQVLKLCANHRITPDMTLQNMKGTERVWLWTACDFADGERKVEHLAVRFKLQDVADSFKKIFDEAKTAQEKDSLITPHVSRSSTPRESPCGKIAVAVLEETTRERTDVIQGDDVADATSEVEVSSTSETTPKAVVSPPKFVFGSESVKSIFSSEKSKPFAFGNSSATGSLFGFSFNAPLKSNNSETSSVAQSGSESKVEPKKCELSKNSDIEQSSDSKVKNLFASFPTEESSINYTFKTPEKAKEKKKPEDSPSDDDVLIVYELTPTAEQKALATKLKLPPTFFCYKNRPDYVSEEEEDDEDFETAVKKLNGKLYLDGSEKCRPLEENTADNEKECIIVWEKKPTVEEKAKADTLKLPPTFFCGVCSDTDEDNGNGEDFQSELQKVQEAQKSQTEEITSTTDSVYTGGTEVMVPSFCKSEEPDSITKSISSPSVSSETMDKPVDLSTRKEIDTDSTSQGESKIVSFGFGSSTGLSFADLASSNSGDFAFGSKDKNFQWANTGAAVFGTQSVGTQSAGKVGEDEDGSDEEVVHNEDIHFEPIVSLPEVEVKSGEEDEEILFKERAKLYRWDRDVSQWKERGVGDIKILWHTMKNYYRILMRRDQVFKVCANHVITKTMELKPLNVSNNALVWTASDYADGEAKVEQLAVRFKTKEVADCFKKTFEECQQNLMKLQKGHVSLAAELSKETNPVVFFDVCADGEPLGRITMELFSNIVPRTAENFRALCTGEKGFGFKNSIFHRVIPDFVCQGGDITKHDGTGGQSIYGDKFEDENFDVKHTGPGLLSMANQGQNTNNSQFVITLKKAEHLDFKHVVFGFVKDGMDTVKKIESFGSPKGSVCRRITITECGQI.

At threonine 19 the chain carries Phosphothreonine. At serine 21 the chain carries Phosphoserine. TPR repeat units lie at residues serine 26–aspartate 59, proline 60–glutamine 93, lysine 94–serine 128, valine 165–leucine 201, glycine 287–cysteine 319, glutamine 583–isoleucine 616, and glutamate 648–tryptophan 681. Residues glycine 760–arginine 802 are disordered. Threonine 779 is subject to Phosphothreonine. Phosphoserine is present on residues serine 781, serine 788, and serine 837. Low complexity predominate over residues tyrosine 785–proline 797. Arginine 945 bears the Asymmetric dimethylarginine mark. Phosphoserine occurs at positions 948 and 955. Repeat unit 1 spans residues phenylalanine 1001–glycine 1002. Residues phenylalanine 1001 to glycine 3206 are 22 X 2 AA repeats of F-G. Arginine 1016 carries the asymmetric dimethylarginine; alternate modification. Arginine 1016 is modified (omega-N-methylarginine; alternate). Threonine 1098 is subject to Phosphothreonine. Residues phenylalanine 1101 to glycine 1102 form repeat 2. Residues serine 1103, serine 1107, and serine 1110 each carry the phosphoserine modification. Residues glycine 1138–proline 1174 are disordered. Repeat 3 spans residues phenylalanine 1142–glycine 1143. Threonine 1144 is modified (phosphothreonine). 2 positions are modified to phosphoserine: serine 1160 and serine 1249. A RanBD1 1 domain is found at histidine 1171–alanine 1307. Lysine 1350 participates in a covalent cross-link: Glycyl lysine isopeptide (Lys-Gly) (interchain with G-Cter in SUMO2). The RanBP2-type 1 zinc finger occupies lysine 1351 to serine 1381. Phosphothreonine is present on residues threonine 1396 and threonine 1412. Residue lysine 1414 forms a Glycyl lysine isopeptide (Lys-Gly) (interchain with G-Cter in SUMO2) linkage. Residues lysine 1415 to alanine 1444 form a RanBP2-type 2 zinc finger. Phosphoserine occurs at positions 1443, 1450, and 1456. The stretch at phenylalanine 1459–glycine 1460 is repeat 4. Residues lysine 1479–glutamine 1508 form a RanBP2-type 3 zinc finger. 2 positions are modified to phosphoserine: serine 1509 and serine 1520. Copy 5 of the repeat occupies phenylalanine 1523–glycine 1524. The RanBP2-type 4 zinc finger occupies lysine 1543–proline 1572. The interval proline 1569–proline 1595 is disordered. Serine 1573 is modified (phosphoserine). The segment covering serine 1573–serine 1583 has biased composition (low complexity). Repeat 6 spans residues phenylalanine 1586–glycine 1587. Lysine 1596 is covalently cross-linked (Glycyl lysine isopeptide (Lys-Gly) (interchain with G-Cter in SUMO2)). Residue lysine 1605 forms a Glycyl lysine isopeptide (Lys-Gly) (interchain with G-Cter in SUMO1); alternate linkage. Lysine 1605 participates in a covalent cross-link: Glycyl lysine isopeptide (Lys-Gly) (interchain with G-Cter in SUMO2); alternate. The RanBP2-type 5 zinc-finger motif lies at lysine 1606 to glutamine 1635. Positions glycine 1633–alanine 1653 are enriched in polar residues. The disordered stretch occupies residues glycine 1633 to glycine 1657. Lysine 1655 participates in a covalent cross-link: Glycyl lysine isopeptide (Lys-Gly) (interchain with G-Cter in SUMO2). A Glycyl lysine isopeptide (Lys-Gly) (interchain with G-Cter in SUMO1); alternate cross-link involves residue lysine 1664. A Glycyl lysine isopeptide (Lys-Gly) (interchain with G-Cter in SUMO2); alternate cross-link involves residue lysine 1664. The segment at lysine 1665–glutamine 1694 adopts a RanBP2-type 6 zinc-finger fold. The segment covering glycine 1692–alanine 1712 has biased composition (polar residues). The disordered stretch occupies residues glycine 1692 to glycine 1716. Lysine 1714 participates in a covalent cross-link: Glycyl lysine isopeptide (Lys-Gly) (interchain with G-Cter in SUMO2). Lysine 1723 is covalently cross-linked (Glycyl lysine isopeptide (Lys-Gly) (interchain with G-Cter in SUMO1); alternate). Lysine 1723 is covalently cross-linked (Glycyl lysine isopeptide (Lys-Gly) (interchain with G-Cter in SUMO2); alternate). RanBP2-type zinc fingers lie at residues lysine 1724 to glutamine 1753 and arginine 1781 to threonine 1810. Residues serine 1833 and serine 1835 each carry the phosphoserine modification. 2 consecutive repeat copies span residues phenylalanine 1852–glycine 1853 and phenylalanine 1861–glycine 1862. Serine 1869 and serine 1871 each carry phosphoserine. Copy 9 of the repeat occupies phenylalanine 1900–glycine 1901. Positions serine 1903–serine 1928 are disordered. The span at asparagine 1907–leucine 1916 shows a compositional bias: basic and acidic residues. 2 consecutive repeat copies span residues phenylalanine 1938–glycine 1939 and phenylalanine 1961–glycine 1962. Lysine 1977 bears the N6-acetyllysine mark. At threonine 2005 the chain carries Phosphothreonine. Serine 2008 carries the post-translational modification Phosphoserine. Residues histidine 2012 to aspartate 2148 enclose the RanBD1 2 domain. Residue lysine 2022 forms a Glycyl lysine isopeptide (Lys-Gly) (interchain with G-Cter in SUMO2) linkage. The segment at leucine 2147–serine 2287 is interaction with BICD2. Residue threonine 2153 is modified to Phosphothreonine. The disordered stretch occupies residues glutamine 2188–tryptophan 2224. Polar residues predominate over residues isoleucine 2211 to proline 2220. Residues serine 2246 and serine 2251 each carry the phosphoserine modification. The stretch at phenylalanine 2260–glycine 2261 is repeat 12. Serine 2270, serine 2280, and serine 2290 each carry phosphoserine. The span at serine 2273–leucine 2284 shows a compositional bias: low complexity. The interval serine 2273 to glycine 2307 is disordered. At threonine 2293 the chain carries Phosphothreonine. Residues threonine 2293–arginine 2305 are compositionally biased toward acidic residues. Residue serine 2297 is modified to Phosphoserine. Positions tyrosine 2309–lysine 2445 constitute a RanBD1 3 domain. A phosphoserine mark is found at serine 2462, serine 2493, and serine 2510. The disordered stretch occupies residues aspartate 2486 to valine 2509. A compositionally biased stretch (low complexity) spans threonine 2492–threonine 2504. Repeat unit 13 spans residues phenylalanine 2516–glycine 2517. Lysine 2522 participates in a covalent cross-link: Glycyl lysine isopeptide (Lys-Gly) (interchain with G-Cter in SUMO2). Residue serine 2526 is modified to Phosphoserine. Tandem repeats lie at residues phenylalanine 2535–glycine 2536 and phenylalanine 2545–glycine 2546. Residues asparagine 2556–glutamate 2569 are compositionally biased toward polar residues. The tract at residues asparagine 2556–aspartate 2584 is disordered. Basic and acidic residues predominate over residues serine 2570 to aspartate 2584. Lysine 2592 participates in a covalent cross-link: Glycyl lysine isopeptide (Lys-Gly) (interchain with G-Cter in SUMO). Residue lysine 2594 forms a Glycyl lysine isopeptide (Lys-Gly) (interchain with G-Cter in SUMO1); alternate linkage. Residue lysine 2594 forms a Glycyl lysine isopeptide (Lys-Gly) (interchain with G-Cter in SUMO2); alternate linkage. Lysine 2612 is covalently cross-linked (Glycyl lysine isopeptide (Lys-Gly) (interchain with G-Cter in SUMO2)). Threonine 2613 carries the phosphothreonine modification. The segment at aspartate 2631 to valine 2635 is interaction with sumoylated RANGAP1. 2 repeat units span residues leucine 2633–asparagine 2685 and isoleucine 2711–glutamine 2761. The interaction with UBE2I stretch occupies residues leucine 2633–asparagine 2685. The segment at leucine 2633 to cysteine 2710 is required for E3 SUMO-ligase activity. Residues leucine 2633–glutamine 2761 form a 2 X 50 AA approximate repeats region. Tyrosine 2666 bears the Phosphotyrosine mark. 2 positions are modified to phosphoserine: serine 2668 and serine 2741. Residues glycine 2686–glutamine 2761 are interaction with SUMO1. Threonine 2743 bears the Phosphothreonine mark. Lysine 2792 participates in a covalent cross-link: Glycyl lysine isopeptide (Lys-Gly) (interchain with G-Cter in SUMO2). Residues serine 2793–aspartate 2818 form a disordered region. A compositionally biased stretch (low complexity) spans isoleucine 2799–serine 2810. Position 2805 is a phosphoserine (serine 2805). Lysine 2815 is covalently cross-linked (Glycyl lysine isopeptide (Lys-Gly) (interchain with G-Cter in SUMO2)). A run of 4 repeats spans residues phenylalanine 2840–glycine 2841, phenylalanine 2842–glycine 2843, phenylalanine 2863–glycine 2864, and phenylalanine 2880–glycine 2881. Position 2900 is a phosphoserine (serine 2900). The RanBD1 4 domain occupies histidine 2911–lysine 3046. One can recognise a PPIase cyclophilin-type domain in the interval phenylalanine 3067–glutamine 3223. 3 consecutive repeat copies span residues phenylalanine 3106–glycine 3107, phenylalanine 3189–glycine 3190, and phenylalanine 3205–glycine 3206. The residue at position 3207 (serine 3207) is a Phosphoserine.

This sequence belongs to the RanBP2 E3 ligase family. In terms of assembly, part of the nuclear pore complex. Forms a complex with NXT1, NXF1 and RANGAP1. Forms a tight complex with RANBP1 and UBE2I. Interacts with SUMO1 but not SUMO2. Interacts with PRKN. Interacts with sumoylated RANGAP1. Interacts with CDCA8. Interacts with PML (isoform PML-4). Interacts with BICD2. Interacts with MCM3AP isoform GANP. Interacts with COX11. Interacts with synaptic plasticity regulator PANTS. (Microbial infection) Interacts with HIV-1 Vpu protein; this interaction allows Vpu to down-regulate BLM sumoylation. In terms of processing, polyubiquitinated by PRKN, which leads to proteasomal degradation. The inner channel of the NPC has a different redox environment from the cytoplasm and allows the formation of interchain disulfide bonds between some nucleoporins, the significant increase of these linkages upon oxidative stress reduces the permeability of the NPC.

It localises to the nucleus. It is found in the nucleus membrane. Its subcellular location is the nuclear pore complex. The protein resides in the nucleus envelope. It participates in protein modification; protein sumoylation. Functionally, E3 SUMO-protein ligase which facilitates SUMO1 and SUMO2 conjugation by UBE2I. Involved in transport factor (Ran-GTP, karyopherin)-mediated protein import via the F-G repeat-containing domain which acts as a docking site for substrates. Binds single-stranded RNA (in vitro). May bind DNA. Component of the nuclear export pathway. Specific docking site for the nuclear export factor exportin-1. Inhibits EIF4E-dependent mRNA export. Sumoylates PML at 'Lys-490' which is essential for the proper assembly of PML-NB. Recruits BICD2 to the nuclear envelope and cytoplasmic stacks of nuclear pore complex known as annulate lamellae during G2 phase of cell cycle. Probable inactive PPIase with no peptidyl-prolyl cis-trans isomerase activity. This Homo sapiens (Human) protein is E3 SUMO-protein ligase RanBP2 (RANBP2).